We begin with the raw amino-acid sequence, 258 residues long: Acetylglutamate kinase (258 aa).

Residues 41–42 (GG), R63, and N156 contribute to the substrate site.

This sequence belongs to the acetylglutamate kinase family. ArgB subfamily.

The protein localises to the cytoplasm. It catalyses the reaction N-acetyl-L-glutamate + ATP = N-acetyl-L-glutamyl 5-phosphate + ADP. The protein operates within amino-acid biosynthesis; L-arginine biosynthesis; N(2)-acetyl-L-ornithine from L-glutamate: step 2/4. Functionally, catalyzes the ATP-dependent phosphorylation of N-acetyl-L-glutamate. The sequence is that of Acetylglutamate kinase from Geobacillus thermodenitrificans (strain NG80-2).